A 132-amino-acid polypeptide reads, in one-letter code: MSMTDNVADMLTRIRNAYKSKLINVSFPSSKIKTSILEVLQKEGYIKNYTSTPKDNISYTEVTLKYSANGDASICEIHRVSKPGKRVYSAIKDLKGYYNNMGIYILSTPYGVMSDREAHIKNVGGEVICKVF.

The protein belongs to the universal ribosomal protein uS8 family. In terms of assembly, part of the 30S ribosomal subunit. Contacts proteins S5 and S12.

Functionally, one of the primary rRNA binding proteins, it binds directly to 16S rRNA central domain where it helps coordinate assembly of the platform of the 30S subunit. The chain is Small ribosomal subunit protein uS8 from Rickettsia bellii (strain OSU 85-389).